A 2559-amino-acid chain; its full sequence is Nonribosomal peptide synthetase asqK (2559 aa).

Positions 90–474 are adenylation 1; sequence YRPSHTAIHA…SRKDSQVKIR (385 aa). A Carrier 1 domain is found at 593 to 669; it reads TNIEQLVHEL…SLVHYPAGLE (77 aa). O-(pantetheine 4'-phosphoryl)serine is present on Ser627. The condensation 1 stretch occupies residues 695–989; the sequence is TVEQSFSQAR…GNVQCIRTKV (295 aa). The adenylation 2 stretch occupies residues 1155–1562; it reads FDEQVRAQTD…GRMDQQVKVR (408 aa). The tract at residues 1681–1776 is methyltransferase; it reads LEIGTGSGMI…NTIKDLVRQG (96 aa). Residues 2090–2164 enclose the Carrier 2 domain; the sequence is AFTSEIERAV…GLAQHLQGLG (75 aa). Ser2124 is modified (O-(pantetheine 4'-phosphoryl)serine). A condensation 2 region spans residues 2261 to 2409; the sequence is FDGVSLSAIL…VNRCLLRVKV (149 aa).

The protein belongs to the NRP synthetase family.

The catalysed reaction is O-methyl-L-tyrosine + anthranilate + S-adenosyl-L-methionine + 2 ATP = (-)-4'-methoxycyclopeptine + 2 AMP + S-adenosyl-L-homocysteine + 2 diphosphate + 2 H(+). It carries out the reaction anthranilate + L-phenylalanine + S-adenosyl-L-methionine + 2 ATP = cyclopeptine + 2 AMP + S-adenosyl-L-homocysteine + 2 diphosphate + 2 H(+). It functions in the pathway secondary metabolite biosynthesis. The protein operates within alkaloid biosynthesis. Its pathway is mycotoxin biosynthesis. Functionally, nonribosomal peptide synthetase; part of the gene cluster that mediates the biosynthesis of the aspoquinolone mycotoxins. The first stage is catalyzed by the nonribosomal peptide synthetase asqK that condenses anthranilic acid and O-methyl-L-tyrosine to produce 4'-methoxycyclopeptin. AsqK is also able to use anthranilic acid and L-phenylalanine as substrates to produce cyclopeptin, but at a tenfold lower rate. Within the pathway, 4'-methoxycyclopeptin is then converted to 4'-methoxydehydrocyclopeptin by the ketoglutarate-dependent dioxygenase asqJ. AsqJ also converts its first product 4'-methoxydehydrocyclopeptin to 4'-methoxycyclopenin. The following conversion of 4'-methoxycyclopenin into 4'-methoxyviridicatin is catalyzed by the cyclopenase asqI. 4'-methoxyviridicatin is the precursor of quinolone natural products, and is further converted to quinolinone B. The prenyltransferase asqH1 then catalyzes the canonical Friedel-Crafts alkylation of quinolinone B with dimethylallyl cation to yield dimethylallyl quinolone, which is subjected to FAD-dependent dehydrogenation by the FAD-linked oxidoreductase asqF to yield conjugated aryl diene. The delta(3') double bond then serves as the site of the second alkylation with DMAPP catalyzed by the prenyltransferase asqH2 to yield a carbenium ion intermediate, which can be attacked by H(2)O to yield a styrenyl quinolone containing a C3'-hydroxyprenyl chain. The FAD-dependent monooxygenase asqG performs epoxidation of the terminal C7'-C8' olefin. Finally, after dehydratation of the epoxide at C3 by asqC, the quinolone epoxide rearrangement protein asqO catalyzes an enzymatic 3-exo-tet cyclization to yield the cyclopropyl-THF ring system in aspoquinolone. This Emericella nidulans (strain FGSC A4 / ATCC 38163 / CBS 112.46 / NRRL 194 / M139) (Aspergillus nidulans) protein is Nonribosomal peptide synthetase asqK.